Here is a 72-residue protein sequence, read N- to C-terminus: Translation initiation factor IF-1 (72 aa).

An S1-like domain is found at 1–72; that stretch reads MAKEEPIEVE…TRGRIIYRTK (72 aa).

The protein belongs to the IF-1 family. Component of the 30S ribosomal translation pre-initiation complex which assembles on the 30S ribosome in the order IF-2 and IF-3, IF-1 and N-formylmethionyl-tRNA(fMet); mRNA recruitment can occur at any time during PIC assembly.

It localises to the cytoplasm. Its function is as follows. One of the essential components for the initiation of protein synthesis. Stabilizes the binding of IF-2 and IF-3 on the 30S subunit to which N-formylmethionyl-tRNA(fMet) subsequently binds. Helps modulate mRNA selection, yielding the 30S pre-initiation complex (PIC). Upon addition of the 50S ribosomal subunit IF-1, IF-2 and IF-3 are released leaving the mature 70S translation initiation complex. This chain is Translation initiation factor IF-1, found in Syntrophus aciditrophicus (strain SB).